A 184-amino-acid chain; its full sequence is ATP synthase subunit delta (184 aa).

It belongs to the ATPase delta chain family. F-type ATPases have 2 components, F(1) - the catalytic core - and F(0) - the membrane proton channel. F(1) has five subunits: alpha(3), beta(3), gamma(1), delta(1), epsilon(1). CF(0) has four main subunits: a(1), b(1), b'(1) and c(10-14). The alpha and beta chains form an alternating ring which encloses part of the gamma chain. F(1) is attached to F(0) by a central stalk formed by the gamma and epsilon chains, while a peripheral stalk is formed by the delta, b and b' chains.

It localises to the cellular thylakoid membrane. In terms of biological role, f(1)F(0) ATP synthase produces ATP from ADP in the presence of a proton or sodium gradient. F-type ATPases consist of two structural domains, F(1) containing the extramembraneous catalytic core and F(0) containing the membrane proton channel, linked together by a central stalk and a peripheral stalk. During catalysis, ATP synthesis in the catalytic domain of F(1) is coupled via a rotary mechanism of the central stalk subunits to proton translocation. Its function is as follows. This protein is part of the stalk that links CF(0) to CF(1). It either transmits conformational changes from CF(0) to CF(1) or is implicated in proton conduction. The sequence is that of ATP synthase subunit delta from Nostoc punctiforme (strain ATCC 29133 / PCC 73102).